Here is a 365-residue protein sequence, read N- to C-terminus: Peptide chain release factor 2 (365 aa).

The residue at position 251 (Gln251) is an N5-methylglutamine.

This sequence belongs to the prokaryotic/mitochondrial release factor family. Post-translationally, methylated by PrmC. Methylation increases the termination efficiency of RF2.

It localises to the cytoplasm. Its function is as follows. Peptide chain release factor 2 directs the termination of translation in response to the peptide chain termination codons UGA and UAA. The sequence is that of Peptide chain release factor 2 from Aliarcobacter butzleri (strain RM4018) (Arcobacter butzleri).